A 205-amino-acid polypeptide reads, in one-letter code: Inactive ribonuclease-like protein 9 (205 aa).

The N-terminal stretch at 1–24 (MMLITTHSLLLLLLLLQLLQPLQF) is a signal peptide. Intrachain disulfides connect cysteine 97–cysteine 152, cysteine 115–cysteine 167, and cysteine 122–cysteine 129. Residues asparagine 130 and asparagine 142 are each glycosylated (N-linked (GlcNAc...) asparagine).

This sequence belongs to the pancreatic ribonuclease family.

The protein resides in the secreted. Functionally, does not exhibit any ribonuclease activity. The protein is Inactive ribonuclease-like protein 9 (RNASE9) of Cebus capucinus (White-faced sapajou).